A 114-amino-acid polypeptide reads, in one-letter code: Dolichyl-diphosphooligosaccharide--protein glycosyltransferase subunit DAD1 (114 aa).

The Cytoplasmic portion of the chain corresponds to 1-30 (MPRATSDAKLLIQSLGKAYAATPTNLKIID). A helical transmembrane segment spans residues 31–51 (LYVVFAVATALIQVVYMGIVG). Residues 52–54 (SFP) lie on the Lumenal side of the membrane. The helical transmembrane segment at 55-75 (FNSFLSGVLSCIGTAVLAVCL) threads the bilayer. Residues 76 to 93 (RIQVNKDNKEFKDLPPER) are Cytoplasmic-facing. A helical membrane pass occupies residues 94–114 (AFADFVLCNLVLHLVIMNFLG).

The protein belongs to the DAD/OST2 family. In terms of assembly, component of the oligosaccharyltransferase (OST) complex.

It is found in the endoplasmic reticulum membrane. Its pathway is protein modification; protein glycosylation. Subunit of the oligosaccharyl transferase (OST) complex that catalyzes the initial transfer of a defined glycan (Glc(3)Man(9)GlcNAc(2) in eukaryotes) from the lipid carrier dolichol-pyrophosphate to an asparagine residue within an Asn-X-Ser/Thr consensus motif in nascent polypeptide chains, the first step in protein N-glycosylation. N-glycosylation occurs cotranslationally and the complex associates with the Sec61 complex at the channel-forming translocon complex that mediates protein translocation across the endoplasmic reticulum (ER). All subunits are required for a maximal enzyme activity. The protein is Dolichyl-diphosphooligosaccharide--protein glycosyltransferase subunit DAD1 (DAD1) of Oryza sativa subsp. indica (Rice).